The sequence spans 235 residues: Ubiquinone/menaquinone biosynthesis C-methyltransferase UbiE (235 aa).

S-adenosyl-L-methionine-binding residues include Thr60, Asp81, and Ser126.

The protein belongs to the class I-like SAM-binding methyltransferase superfamily. MenG/UbiE family.

The enzyme catalyses a 2-demethylmenaquinol + S-adenosyl-L-methionine = a menaquinol + S-adenosyl-L-homocysteine + H(+). The catalysed reaction is a 2-methoxy-6-(all-trans-polyprenyl)benzene-1,4-diol + S-adenosyl-L-methionine = a 5-methoxy-2-methyl-3-(all-trans-polyprenyl)benzene-1,4-diol + S-adenosyl-L-homocysteine + H(+). It participates in quinol/quinone metabolism; menaquinone biosynthesis; menaquinol from 1,4-dihydroxy-2-naphthoate: step 2/2. Its pathway is cofactor biosynthesis; ubiquinone biosynthesis. Functionally, methyltransferase required for the conversion of demethylmenaquinol (DMKH2) to menaquinol (MKH2) and the conversion of 2-polyprenyl-6-methoxy-1,4-benzoquinol (DDMQH2) to 2-polyprenyl-3-methyl-6-methoxy-1,4-benzoquinol (DMQH2). This Citrifermentans bemidjiense (strain ATCC BAA-1014 / DSM 16622 / JCM 12645 / Bem) (Geobacter bemidjiensis) protein is Ubiquinone/menaquinone biosynthesis C-methyltransferase UbiE.